Consider the following 414-residue polypeptide: L-cysteine:1D-myo-inositol 2-amino-2-deoxy-alpha-D-glucopyranoside ligase (414 aa).

Position 44 (Cys44) interacts with Zn(2+). Residues 44 to 47 (CGIT), Thr59, and 82 to 84 (NIT) contribute to the L-cysteinyl-5'-AMP site. A 'HIGH' region motif is present at residues 46–56 (ITPYDSTHLGH). Residues 188-193 (ERGGDP) carry the 'ERGGDP' region motif. An L-cysteinyl-5'-AMP-binding site is contributed by Trp228. Cys232 contributes to the Zn(2+) binding site. 250–252 (GSD) contacts L-cysteinyl-5'-AMP. A Zn(2+)-binding site is contributed by His257. Residue Ile284 participates in L-cysteinyl-5'-AMP binding. A 'KMSKS' region motif is present at residues 290-294 (KMSKS).

This sequence belongs to the class-I aminoacyl-tRNA synthetase family. MshC subfamily. Monomer. The cofactor is Zn(2+).

It catalyses the reaction 1D-myo-inositol 2-amino-2-deoxy-alpha-D-glucopyranoside + L-cysteine + ATP = 1D-myo-inositol 2-(L-cysteinylamino)-2-deoxy-alpha-D-glucopyranoside + AMP + diphosphate + H(+). Its function is as follows. Catalyzes the ATP-dependent condensation of GlcN-Ins and L-cysteine to form L-Cys-GlcN-Ins. This Corynebacterium diphtheriae (strain ATCC 700971 / NCTC 13129 / Biotype gravis) protein is L-cysteine:1D-myo-inositol 2-amino-2-deoxy-alpha-D-glucopyranoside ligase (mshC).